Reading from the N-terminus, the 146-residue chain is MISKILCLSLLVAAVVADQVDVKDCANNEIKKVMVDGCHGSDPCIIHRGKPFTLEALFDANQNTKTAKIEIKASLDGLEIDVPGIDTNACHFMKCPLVKGQQYDIKYTWNVPKIAPKSENVVVTVKLIGDNGVLACAIATHGKIRD.

The first 17 residues, 1 to 17, serve as a signal peptide directing secretion; that stretch reads MISKILCLSLLVAAVVA. Intrachain disulfides connect Cys-25–Cys-136, Cys-38–Cys-44, and Cys-90–Cys-95.

The protein belongs to the NPC2 family.

It localises to the secreted. In Dermatophagoides farinae (American house dust mite), this protein is Mite group 2 allergen Der f 2 (DERF2).